A 550-amino-acid chain; its full sequence is Methionine--tRNA ligase (550 aa).

A 'HIGH' region motif is present at residues 13–23; it reads PYANGPLHFGH. Residues Cys-145, Cys-148, Cys-158, and Cys-161 each coordinate Zn(2+). The 'KMSKS' region motif lies at 331-335; that stretch reads QFSKS. Lys-334 is an ATP binding site.

It belongs to the class-I aminoacyl-tRNA synthetase family. MetG type 1 subfamily. In terms of assembly, monomer. Zn(2+) is required as a cofactor.

Its subcellular location is the cytoplasm. The catalysed reaction is tRNA(Met) + L-methionine + ATP = L-methionyl-tRNA(Met) + AMP + diphosphate. Its function is as follows. Is required not only for elongation of protein synthesis but also for the initiation of all mRNA translation through initiator tRNA(fMet) aminoacylation. The protein is Methionine--tRNA ligase of Chlamydia trachomatis serovar L2b (strain UCH-1/proctitis).